Consider the following 361-residue polypeptide: Deoxyhypusine hydroxylase (361 aa).

HEAT-like PBS-type repeat units lie at residues leucine 59–asparagine 85, valine 94–aspartate 120, glutamine 183–aspartate 211, and phenylalanine 216–aspartate 242. Residues histidine 61, glutamate 62, histidine 96, and glutamate 97 each coordinate Fe cation. 4 residues coordinate Fe cation: histidine 218, glutamate 219, histidine 251, and glutamate 252.

This sequence belongs to the deoxyhypusine hydroxylase family. Requires Fe(2+) as cofactor.

The protein localises to the cytoplasm. It is found in the nucleus. The catalysed reaction is [eIF5A protein]-deoxyhypusine + AH2 + O2 = [eIF5A protein]-hypusine + A + H2O. It participates in protein modification; eIF5A hypusination. Functionally, catalyzes the hydroxylation of the N(6)-(4-aminobutyl)-L-lysine intermediate to form hypusine, an essential post-translational modification only found in mature eIF-5A factor. The protein is Deoxyhypusine hydroxylase of Cryptococcus neoformans var. neoformans serotype D (strain JEC21 / ATCC MYA-565) (Filobasidiella neoformans).